Here is a 272-residue protein sequence, read N- to C-terminus: Insulin-like growth factor-binding protein 5 (272 aa).

A signal peptide spans 1–20; that stretch reads MVLLTAVLLLLAAYAGPAQS. The region spanning 23-103 is the IGFBP N-terminal domain; sequence SFVHCEPCDE…LHGRGVCLNE (81 aa). Cystine bridges form between Cys27/Cys53, Cys30/Cys55, Cys38/Cys56, Cys45/Cys59, Cys67/Cys80, and Cys74/Cys100. Basic and acidic residues predominate over residues 111-122; that stretch reads KIERDSREHEEP. The segment at 111–130 is disordered; the sequence is KIERDSREHEEPTTSEMAEE. Phosphoserine; by FAM20C is present on Ser116. Residue Thr172 is glycosylated (O-linked (HexNAc...) threonine). Positions 189 to 263 constitute a Thyroglobulin type-1 domain; sequence QGPCRRHMEA…MEYVDGDFQC (75 aa). Disulfide bonds link Cys192/Cys219, Cys230/Cys241, and Cys243/Cys263.

In terms of assembly, interacts with IGF1; this interaction enhances the growth stimulatory effects of IGF1 on fibroblasts. Interacts with CAV1; this interaction allows trafficking of IGFBP5 from the plasma membrane to the nucleus. Interacts with NCL; this interaction is necessary for IGFBP5 localization to the nucleus. In terms of processing, cleaved by C1S in extracellular space. As to expression, osteosarcoma, and at lower levels in liver, kidney and brain.

It is found in the secreted. The protein resides in the cytoplasm. The protein localises to the nucleus. In terms of biological role, multifunctional protein that plays a critical role in regulating the availability of IGFs to their receptors and thereby regulates IGF-mediated cellular processes including proliferation, differentiation, and apoptosis in a cell-type specific manner. Increases the cell proliferation of osteoblasts, intestinal smooth muscle cells and neuroblastoma cells. Enhances adhesion and survival of epithelial cells but decreases adhesion of mesenchymal cells. Once secreted, acts as a major mediator of mTORC1-dependent feedback inhibition of IGF1 signaling. Also plays a role in the induction of extracellular matrix (ECM) production and deposition independently of its nuclear translocation and binding to IGFs. Acts itself as a growth factor that can act independently of IGFs to regulate bone formation. Acts as a ligand for the ROR1 receptor which triggers formation of ROR1/HER2 heterodimer to enhance CREB oncogenic signaling. The sequence is that of Insulin-like growth factor-binding protein 5 (IGFBP5) from Homo sapiens (Human).